We begin with the raw amino-acid sequence, 185 residues long: Translocon-associated protein subunit gamma (185 aa).

Met-1 is subject to N-acetylmethionine. The Lumenal portion of the chain corresponds to 1–27 (MAPKGSSKQQSEEDLLLQDFSRNLSAK). Phosphoserine is present on residues Ser-7 and Ser-11. The helical transmembrane segment at 28-48 (SSALFFGNAFIVSAIPIWLYW) threads the bilayer. Residues 49-54 (RIWHMD) are Cytoplasmic-facing. The chain crosses the membrane as a helical span at residues 55 to 76 (LIQSAVLYSVMTLVSTYLVAFA). At 77-135 (YKNVKFVLKHKVAQKREDAVSKEVTRKLSEADNRKMSRKEKDERILWKKNEVADYEATT) the chain is on the lumenal side. Residue Ser-105 is modified to Phosphoserine. The chain crosses the membrane as a helical span at residues 136–157 (FSIFYNNTLFLVVVIVASFFIL). At 158–163 (KNFNPT) the chain is on the cytoplasmic side. Residues 164-184 (VNYILSISASSGLIALLSTGS) traverse the membrane as a helical segment.

This sequence belongs to the TRAP-gamma family. As to quaternary structure, heterotetramer of TRAP-alpha, TRAP-beta, TRAP-delta and TRAP-gamma.

It localises to the endoplasmic reticulum membrane. Functionally, TRAP proteins are part of a complex whose function is to bind calcium to the ER membrane and thereby regulate the retention of ER resident proteins. This chain is Translocon-associated protein subunit gamma (SSR3), found in Homo sapiens (Human).